The chain runs to 410 residues: Auxin-induced protein 5NG4 (410 aa).

Residues 1-16 are Cytoplasmic-facing; that stretch reads MASNIMQRCNVFMSER. A helical membrane pass occupies residues 17-37; it reads VKLHAAMLALQFGYAGFHIVS. The Extracellular portion of the chain corresponds to 38-47; sequence RAALNMGVSK. A helical transmembrane segment spans residues 48 to 68; that stretch reads VVFPVYRNILALMLIGPCAYF. The Cytoplasmic portion of the chain corresponds to 69 to 74; the sequence is LEKKER. Residues 75–95 traverse the membrane as a helical segment; the sequence is PALTLSFLIQFFLLALCGITG. Over 96-109 the chain is Extracellular; the sequence is QSRILSLRIVLHIP. A helical transmembrane segment spans residues 110–130; it reads TFASAIQNSVPAITFIMAAAL. At 131-141 the chain is on the cytoplasmic side; the sequence is RLEKVHISRRD. A helical transmembrane segment spans residues 142-162; the sequence is GLAKIIGTVACVSGATIITLY. Topologically, residues 163–196 are extracellular; it reads KGPPITHIWRPNLEVTASYFKAFQGNDLSAKSEN. The N-linked (GlcNAc...) asparagine glycan is linked to asparagine 196. A helical membrane pass occupies residues 197 to 217; that stretch reads WTLGCIYLLGNCLAWSGWIVL. Residues 209–338 form the EamA domain; the sequence is LAWSGWIVLQ…IIIGLYLVLW (130 aa). Over 218-229 the chain is Cytoplasmic; the sequence is QAPVLKRYPARL. A helical transmembrane segment spans residues 230 to 250; sequence SVTSFTCFFGVIQFLIIAAFF. Residues 251–264 lie on the Extracellular side of the membrane; that stretch reads ETDLEHWKIHSGGE. The chain crosses the membrane as a helical span at residues 265–285; sequence LFTILYAGFVASGIAFSVQIW. Over 286–292 the chain is Cytoplasmic; it reads CIDRGGP. Residues 293 to 313 traverse the membrane as a helical segment; that stretch reads VFVAVYQPVQTIAVAIMASII. Residues 314 to 317 lie on the Extracellular side of the membrane; that stretch reads LGEQ. Residues 318–338 traverse the membrane as a helical segment; that stretch reads FYLGGIFGAILIIIGLYLVLW. Residues 339–410 are Cytoplasmic-facing; that stretch reads GKSEEKRLGL…IPSPSDEPQP (72 aa).

The protein belongs to the drug/metabolite transporter (DMT) superfamily. Plant drug/metabolite exporter (P-DME) (TC 2.A.7.4) family.

The protein resides in the membrane. In Pinus taeda (Loblolly pine), this protein is Auxin-induced protein 5NG4.